The chain runs to 130 residues: Ribonuclease VapC22 (130 aa).

A PINc domain is found at 4–119 (VLLDSHVAYW…RLVTKDRRLR (116 aa)). Residues Asp-7 and Asp-97 each contribute to the Mg(2+) site.

It belongs to the PINc/VapC protein family. It depends on Mg(2+) as a cofactor.

It localises to the secreted. Functionally, toxic component of a type II toxin-antitoxin (TA) system. An RNase. Upon expression in M.smegmatis inhibits translation and colony formation. Its toxic effect on colony formation is neutralized by coexpression with cognate antitoxin VapB22; the effect on translation has not been tested but is probably neutralized also. In Mycobacterium tuberculosis (strain ATCC 25618 / H37Rv), this protein is Ribonuclease VapC22.